The following is a 99-amino-acid chain: Leydig cell tumor 10 kDa protein homolog (99 aa).

Positions 1–36 (MAQGQRKFQAHKPAKSKTAAAASEKNRGPRKGGRVI) are disordered.

It belongs to the UPF0390 family.

In terms of biological role, may have a potential role in hypercalcemia of malignancy. In Homo sapiens (Human), this protein is Leydig cell tumor 10 kDa protein homolog (C19orf53).